We begin with the raw amino-acid sequence, 438 residues long: V-type ATP synthase beta chain (438 aa).

The protein belongs to the ATPase alpha/beta chains family.

In terms of biological role, produces ATP from ADP in the presence of a proton gradient across the membrane. The V-type beta chain is a regulatory subunit. The protein is V-type ATP synthase beta chain of Chlamydia felis (strain Fe/C-56) (Chlamydophila felis).